A 398-amino-acid chain; its full sequence is Elongation factor Tu (398 aa).

One can recognise a tr-type G domain in the interval 10–207 (KPHVNIGTIG…TVDEYIPEPE (198 aa)). Residues 19–26 (GHVDHGKT) are G1. A GTP-binding site is contributed by 19–26 (GHVDHGKT). A Mg(2+)-binding site is contributed by Thr-26. The G2 stretch occupies residues 63 to 67 (GITIN). The tract at residues 84-87 (DAPG) is G3. Residues 84–88 (DAPGH) and 139–142 (NKVD) contribute to the GTP site. A G4 region spans residues 139–142 (NKVD). Positions 177–179 (SAL) are G5.

It belongs to the TRAFAC class translation factor GTPase superfamily. Classic translation factor GTPase family. EF-Tu/EF-1A subfamily. In terms of assembly, monomer.

It is found in the cytoplasm. It catalyses the reaction GTP + H2O = GDP + phosphate + H(+). In terms of biological role, GTP hydrolase that promotes the GTP-dependent binding of aminoacyl-tRNA to the A-site of ribosomes during protein biosynthesis. The chain is Elongation factor Tu from Streptococcus suis (strain 98HAH33).